Here is a 771-residue protein sequence, read N- to C-terminus: Topoisomerase 1-associated factor 2 (771 aa).

Disordered regions lie at residues Asn-48 to Ser-69, Glu-271 to Asp-330, and Ser-346 to Leu-367. Positions Asn-51–Ser-69 are enriched in low complexity. Polar residues predominate over residues Thr-275–Asn-294. Residues Asp-295–Leu-307 are compositionally biased toward basic and acidic residues. Polar residues predominate over residues Ser-346–Ala-359. Ser-397 carries the phosphoserine modification. Residue Thr-405 is modified to Phosphothreonine. The interval Asn-633–Gln-771 is disordered. Over residues Ala-640–Val-652 the composition is skewed to polar residues. Residues Ser-690–Ser-709 are compositionally biased toward low complexity.

To yeast YJL076w. As to quaternary structure, interacts with HPR1.

The protein resides in the nucleus. The chain is Topoisomerase 1-associated factor 2 (TOF2) from Saccharomyces cerevisiae (strain ATCC 204508 / S288c) (Baker's yeast).